Here is a 176-residue protein sequence, read N- to C-terminus: Large ribosomal subunit protein uL10 (176 aa).

The protein belongs to the universal ribosomal protein uL10 family. As to quaternary structure, part of the ribosomal stalk of the 50S ribosomal subunit. The N-terminus interacts with L11 and the large rRNA to form the base of the stalk. The C-terminus forms an elongated spine to which L12 dimers bind in a sequential fashion forming a multimeric L10(L12)X complex.

Functionally, forms part of the ribosomal stalk, playing a central role in the interaction of the ribosome with GTP-bound translation factors. The chain is Large ribosomal subunit protein uL10 (rplJ) from Streptomyces coelicolor (strain ATCC BAA-471 / A3(2) / M145).